A 615-amino-acid polypeptide reads, in one-letter code: MRALLLLGFLLVSLESTLSIPPWEAPKEHKYKAEEHTVVLTVTGEPCHFPFQYHRQLYHKCTHKGRPGPQPWCATTPNFDQDQRWGYCLEPKKVKDHCSKHSPCQKGGTCVNMPSGPHCLCPQHLTGNHCQKEKCFEPQLLRFFHKNEIWYRTEQAAVARCQCKGPDAHCQRLASQACRTNPCLHGGRCLEVEGHRLCHCPVGYTGAFCDVDTKASCYDGRGLSYRGLARTTLSGAPCQPWASEATYRNVTAEQARNWGLGGHAFCRNPDNDIRPWCFVLNRDRLSWEYCDLAQCQTPTQAAPPTPVSPRLHVPLMPAQPAPPKPQPTTRTPPQSQTPGALPAKREQPPSLTRNGPLSCGQRLRKSLSSMTRVVGGLVALRGAHPYIAALYWGHSFCAGSLIAPCWVLTAAHCLQDRPAPEDLTVVLGQERRNHSCEPCQTLAVRSYRLHEAFSPVSYQHDLALLRLQEDADGSCALLSPYVQPVCLPSGAARPSETTLCQVAGWGHQFEGAEEYASFLQEAQVPFLSLERCSAPDVHGSSILPGMLCAGFLEGGTDACQGDSGGPLVCEDQAAERRLTLQGIISWGSGCGDRNKPGVYTDVAYYLAWIREHTVS.

Positions 1-19 (MRALLLLGFLLVSLESTLS) are cleaved as a signal peptide. The Fibronectin type-II domain maps to 42-90 (VTGEPCHFPFQYHRQLYHKCTHKGRPGPQPWCATTPNFDQDQRWGYCLE). Cystine bridges form between Cys47/Cys73, Cys61/Cys88, Cys98/Cys110, Cys104/Cys119, Cys121/Cys130, Cys135/Cys163, Cys161/Cys170, Cys178/Cys189, Cys183/Cys198, Cys200/Cys209, Cys217/Cys295, Cys238/Cys277, and Cys266/Cys290. One can recognise an EGF-like 1 domain in the interval 94–131 (VKDHCSKHSPCQKGGTCVNMPSGPHCLCPQHLTGNHCQ). Thr109 is a glycosylation site (O-linked (Fuc) threonine). Residues 133-173 (EKCFEPQLLRFFHKNEIWYRTEQAAVARCQCKGPDAHCQRL) enclose the Fibronectin type-I domain. The EGF-like 2 domain maps to 174-210 (ASQACRTNPCLHGGRCLEVEGHRLCHCPVGYTGAFCD). Positions 217-295 (CYDGRGLSYR…SWEYCDLAQC (79 aa)) constitute a Kringle domain. Asn249 carries an N-linked (GlcNAc...) asparagine glycan. The interval 298–359 (PTQAAPPTPV…SLTRNGPLSC (62 aa)) is disordered. Residues Thr299 and Thr305 are each glycosylated (O-linked (GalNAc...) threonine). An O-linked (GalNAc...) serine glycan is attached at Ser308. The span at 317 to 326 (PAQPAPPKPQ) shows a compositional bias: pro residues. Over residues 327 to 338 (PTTRTPPQSQTP) the composition is skewed to low complexity. Residues Thr328, Thr329, and Thr337 are each glycosylated (O-linked (GalNAc...) threonine). Disulfide bonds link Cys359–Cys486, Cys397–Cys413, Cys405–Cys475, Cys436–Cys439, Cys500–Cys569, Cys532–Cys548, and Cys559–Cys590. Residues 373-614 (VVGGLVALRG…YLAWIREHTV (242 aa)) enclose the Peptidase S1 domain. His412 acts as the Charge relay system in catalysis. Asn433 is a glycosylation site (N-linked (GlcNAc...) asparagine). Asp461 serves as the catalytic Charge relay system. Residue Ser563 is the Charge relay system of the active site.

This sequence belongs to the peptidase S1 family. Interacts with HRG; the interaction, which is enhanced in the presence of zinc ions and inhibited by heparin-binding, inhibits factor XII autoactivation and contact-initiated coagulation. Interacts (inactive and activated) with D7L2, an anticoagulant protein from Anopheles gambiae. Interacts (activated) with iripin-8, a serine protease inhibitor from Ixodes ricinus saliva. Interacts (inactive and activated) (via amino acids 1-77) with triafestin-1 and triafestin-2, anticoagulant proteins from Triatoma infestans. Interacts (inactive and activated) (via amino acids 1-77) with short form salivary protein D7R1, an anticoagulant protein from Anopheles stephensi. Interacts (inactive and activated) (via fibronectin type II domain) with haemaphysalin, an anticoagulant protein from Haemaphysalis longicornis. In terms of processing, factor XII is activated by kallikrein in alpha-factor XIIa, which is further converted by trypsin into beta-factor XIIa. Alpha-factor XIIa is composed of an NH2-terminal heavy chain, called coagulation factor XIIa heavy chain, and a COOH-terminal light chain, called coagulation factor XIIa light chain, connected by a disulfide bond. Beta-factor XIIa is composed of 2 chains linked by a disulfide bond, an N-terminal nonapeptide, called beta-factor XIIa part 1, and coagulation factor XIIa light chain, also known in this context as beta-factor XIIa part 2. Post-translationally, O- and N-glycosylated. The O-linked polysaccharides were not identified, but are probably the mucin type linked to GalNAc.

Its subcellular location is the secreted. The catalysed reaction is Selective cleavage of Arg-|-Ile bonds in factor VII to form factor VIIa and factor XI to form factor XIa.. With respect to regulation, activity is promoted in the presence of negatively charged surfaces. Factor XII is a serum glycoprotein that participates in the initiation of blood coagulation, fibrinolysis, and the generation of bradykinin and angiotensin. Prekallikrein is cleaved by factor XII to form kallikrein, which then cleaves factor XII first to alpha-factor XIIa and then trypsin cleaves it to beta-factor XIIa. Alpha-factor XIIa activates factor XI to factor XIa. The polypeptide is Coagulation factor XII (F12) (Homo sapiens (Human)).